Here is a 38-residue protein sequence, read N- to C-terminus: Large ribosomal subunit protein bL36 (38 aa).

It belongs to the bacterial ribosomal protein bL36 family.

This chain is Large ribosomal subunit protein bL36, found in Roseiflexus castenholzii (strain DSM 13941 / HLO8).